Reading from the N-terminus, the 493-residue chain is Glutamyl-tRNA(Gln) amidotransferase subunit A (493 aa).

Active-site charge relay system residues include K78 and S158. The Acyl-ester intermediate role is filled by S182.

Belongs to the amidase family. GatA subfamily. Heterotrimer of A, B and C subunits.

The catalysed reaction is L-glutamyl-tRNA(Gln) + L-glutamine + ATP + H2O = L-glutaminyl-tRNA(Gln) + L-glutamate + ADP + phosphate + H(+). In terms of biological role, allows the formation of correctly charged Gln-tRNA(Gln) through the transamidation of misacylated Glu-tRNA(Gln) in organisms which lack glutaminyl-tRNA synthetase. The reaction takes place in the presence of glutamine and ATP through an activated gamma-phospho-Glu-tRNA(Gln). The polypeptide is Glutamyl-tRNA(Gln) amidotransferase subunit A (Rickettsia felis (strain ATCC VR-1525 / URRWXCal2) (Rickettsia azadi)).